The following is a 359-amino-acid chain: Diacyltrehalose acyltransferase Chp2 (359 aa).

A helical transmembrane segment spans residues 4–24; sequence VIAGAFAVWLVGWAGGFGTAI. The PE-PPE domain maps to 79-316; that stretch reads PNAKHDLIDY…VLQPQIDAAY (238 aa).

The protein belongs to the mycobacterial PPE family.

The protein resides in the cell inner membrane. Activity is probably potentiated by the DAT/PAT transporter MmpL10. Inhibited by the lipase inhibitor tetrahydrolipstatin (THL). Functionally, involved in the final steps of polyacyltrehalose (PAT) biosynthesis. Catalyzes the transfer of three mycolipenoyl groups onto diacyltrehalose (DAT) to form PAT. This is Diacyltrehalose acyltransferase Chp2 from Mycobacterium tuberculosis (strain ATCC 25618 / H37Rv).